The chain runs to 332 residues: Receptor polysaccharide phosphotransferase WefC (332 aa).

It belongs to the stealth family.

This Streptococcus oralis protein is Receptor polysaccharide phosphotransferase WefC (wefC).